The following is a 349-amino-acid chain: Phenylalanine--tRNA ligase alpha subunit (349 aa).

Glutamate 258 provides a ligand contact to Mg(2+).

This sequence belongs to the class-II aminoacyl-tRNA synthetase family. Phe-tRNA synthetase alpha subunit type 1 subfamily. In terms of assembly, tetramer of two alpha and two beta subunits. Mg(2+) is required as a cofactor.

The protein localises to the cytoplasm. It catalyses the reaction tRNA(Phe) + L-phenylalanine + ATP = L-phenylalanyl-tRNA(Phe) + AMP + diphosphate + H(+). In Rickettsia canadensis (strain McKiel), this protein is Phenylalanine--tRNA ligase alpha subunit.